The primary structure comprises 222 residues: Putative germin-like protein subfamily 1 member 9 (222 aa).

An N-terminal signal peptide occupies residues 1–22 (MKSFSFLAVLSILAITLSLSKA). Residues C32 and C49 are joined by a disulfide bond. In terms of domain architecture, Cupin type-1 spans 63 to 213 (TGLHEARPPN…AFQVDPKIVM (151 aa)). An N-linked (GlcNAc...) asparagine glycan is attached at N78. H111, H113, E118, and H159 together coordinate Mn(2+).

The protein belongs to the germin family. In terms of assembly, oligomer (believed to be a pentamer but probably hexamer).

It localises to the secreted. The protein localises to the extracellular space. The protein resides in the apoplast. May play a role in plant defense. Probably has no oxalate oxidase activity even if the active site is conserved. This is Putative germin-like protein subfamily 1 member 9 from Arabidopsis thaliana (Mouse-ear cress).